Reading from the N-terminus, the 165-residue chain is MKTSRLPIAIQQAVMRRLREKLAQANLKLGCNYPEPKLSYTQRGTSAGTAWLESYEIRLNPVLLLENSEAFIEEVVPHELAHLLVWKHFGRVAPHGKEWKWMMESVLGVPARRTHQFELQSVRRNTFPYRCKCQEHQLTVRRHNRVVRGEAVYRCVHCGEQLVAK.

The SprT-like domain maps to 22-163; it reads LAQANLKLGC…RCVHCGEQLV (142 aa). Residue histidine 78 participates in Zn(2+) binding. The active site involves glutamate 79. Histidine 82 serves as a coordination point for Zn(2+).

The protein belongs to the SprT family. Zn(2+) serves as cofactor.

Its subcellular location is the cytoplasm. The chain is Protein SprT from Shigella dysenteriae serotype 1 (strain Sd197).